The sequence spans 226 residues: Small ribosomal subunit protein uS2c (226 aa).

The protein belongs to the universal ribosomal protein uS2 family.

Its subcellular location is the plastid. It is found in the chloroplast. The chain is Small ribosomal subunit protein uS2c (rps2) from Phaeodactylum tricornutum (strain CCAP 1055/1).